The primary structure comprises 432 residues: tRNA(Ile)-lysidine synthase (432 aa).

19-24 (STGIDS) contributes to the ATP binding site.

This sequence belongs to the tRNA(Ile)-lysidine synthase family.

The protein resides in the cytoplasm. The catalysed reaction is cytidine(34) in tRNA(Ile2) + L-lysine + ATP = lysidine(34) in tRNA(Ile2) + AMP + diphosphate + H(+). Ligates lysine onto the cytidine present at position 34 of the AUA codon-specific tRNA(Ile) that contains the anticodon CAU, in an ATP-dependent manner. Cytidine is converted to lysidine, thus changing the amino acid specificity of the tRNA from methionine to isoleucine. This is tRNA(Ile)-lysidine synthase from Staphylococcus epidermidis (strain ATCC 35984 / DSM 28319 / BCRC 17069 / CCUG 31568 / BM 3577 / RP62A).